We begin with the raw amino-acid sequence, 661 residues long: B3 domain-containing protein Os12g0591400 (661 aa).

4 DNA-binding regions (TF-B3) span residues 2-95, 197-290, 437-535, and 562-658; these read GDQK…FNPS, KTRC…FNPS, LYIT…FKES, and TNLT…IRKG.

It is found in the nucleus. This is B3 domain-containing protein Os12g0591400 from Oryza sativa subsp. japonica (Rice).